Reading from the N-terminus, the 614-residue chain is MAHTSVASLVVVLIVAFLTPILLHRFKLSIPVVVAEIIMGLIIGKSGLNLVVEGDTWLQTLSMLGFIFLMFLSGLEIDFSSFEKGKKKQFLPNGKEAPNTFAAASVIFVGIFILSLLLSYGFVLAGFIQNAFLMTLIISTISLGVVVPTLKEERIMNSNIGQIILLVAVIADLATMILLAVFSSLYGEDSGNMWLLMILFAAGVVLYFFGRVFKHRSFVQSMSKGTIQIGTRAIFTLIIVLVALSESLGAENILGAFLAGVLVSLLSPNKELVQQLDSFGYGFLIPIFFVMVGVKLDIWTLFQDKTILIMIPLLLLALLVSKIIPVMYLKKWYDNRTIFASGFLLTSTLSLVIAAATIGQQLHVISTNMSGALILVAVIASIFTPICFKKLYKREEQPEEKKTITFIGANQMTLPVTLELPEEEYDVRVVHVYQENAEEKLSESVFAVETISDYEHETLESLGIFETDILVVATGNEDMNADIALLAKDKGTERVIASVGSPEHEAALKEQGISIFSILLSTKTLLRALIEAPGVMKLLTNQESSLYQINMENSKYDGVILREFPLTGDVIFVRIFRGVDSIVPHGDTRLKLGDRLIVTGSRGYVTDLKKTLEG.

The next 13 membrane-spanning stretches (helical) occupy residues 3–23 (HTSV…PILL), 32–52 (VVVA…NLVV), 57–77 (WLQT…GLEI), 107–127 (IFVG…LAGF), 130–150 (NAFL…VPTL), 163–183 (IILL…AVFS), 193–213 (MWLL…GRVF), 225–244 (GTIQ…LVAL), 248–267 (LGAE…SLLS), 282–302 (GFLI…WTLF), 307–327 (ILIM…IPVM), 338–358 (IFAS…AATI), and 368–388 (NMSG…PICF). An RCK N-terminal domain is found at 401 to 519 (KKTITFIGAN…EQGISIFSIL (119 aa)). An RCK C-terminal domain is found at 533–614 (PGVMKLLTNQ…VTDLKKTLEG (82 aa)).

It belongs to the monovalent cation:proton antiporter 2 (CPA2) transporter (TC 2.A.37) family.

The protein localises to the cell membrane. With respect to regulation, binds cyclic di-AMP (c-di-AMP), which may regulate the transporter activity. In terms of biological role, probable Na(+)/H(+) antiporter. This Bacillus subtilis (strain 168) protein is Putative Na(+)/H(+) antiporter YjbQ.